The chain runs to 908 residues: 26S proteasome non-ATPase regulatory subunit 2 (908 aa).

Methionine 1 carries the N-acetylmethionine modification. Residues methionine 1–glutamine 51 form a disordered region. Threonine 9 bears the Phosphothreonine mark. Residues proline 10–alanine 20 are compositionally biased toward polar residues. Positions alanine 24–glutamine 51 are enriched in basic and acidic residues. Phosphoserine occurs at positions 29 and 147. Residue tyrosine 194 is modified to Phosphotyrosine. Phosphoserine is present on residues serine 361 and serine 363. PC repeat units lie at residues serine 409 to serine 442, glycine 443 to leucine 479, glycine 480 to valine 514, valine 517 to lysine 551, and leucine 560 to serine 589. Lysine 551 is modified (N6-acetyllysine). Residues lysine 623–proline 643 show a composition bias toward basic and acidic residues. Residues lysine 623–aspartate 645 are disordered. 2 PC repeats span residues leucine 692–tyrosine 723 and alanine 742–asparagine 757. A required for interaction with UBLCP1 region spans residues aspartate 708–asparagine 903.

It belongs to the proteasome subunit S2 family. Component of the 19S proteasome regulatory particle complex. The 26S proteasome consists of a 20S core particle (CP) and two 19S regulatory subunits (RP). The regulatory particle is made of a lid composed of 9 subunits, a base containing 6 ATPases and few additional components including PSMD2. Interacts with RPGRIP1L. Interacts with CRY1 in a KDM8-dependent manner. Interacts (via C-terminus) with phosphatase UBLCP1 (via ubiquitin-like domain); the interaction recruits UBLCP1 to the 19S regulatory particle where it dephosphorylates 19S subunit PSMC2/RPT1 which impairs PSMC2 ATPase activity and disrupts 26S proteasome assembly.

Functionally, component of the 26S proteasome, a multiprotein complex involved in the ATP-dependent degradation of ubiquitinated proteins. This complex plays a key role in the maintenance of protein homeostasis by removing misfolded or damaged proteins, which could impair cellular functions, and by removing proteins whose functions are no longer required. Therefore, the proteasome participates in numerous cellular processes, including cell cycle progression, apoptosis, or DNA damage repair. Binds to the intracellular domain of tumor necrosis factor type 1 receptor. The binding domain of TRAP1 and TRAP2 resides outside the death domain of TNFR1. The chain is 26S proteasome non-ATPase regulatory subunit 2 (Psmd2) from Rattus norvegicus (Rat).